Here is a 155-residue protein sequence, read N- to C-terminus: UPF0461 protein C5orf24 homolog (155 aa).

Residues 1–10 are compositionally biased toward polar residues; that stretch reads MMHPVASSNP. A disordered region spans residues 1–20; sequence MMHPVASSNPAFCGPGKPSC. A Phosphoserine modification is found at serine 37. Residues 40–155 form a disordered region; the sequence is SKYSHTVNHK…QQAFRCSSDA (116 aa). The segment covering 57-70 has biased composition (polar residues); the sequence is DPLNETHLQTTSGR. Residue lysine 75 forms a Glycyl lysine isopeptide (Lys-Gly) (interchain with G-Cter in SUMO2) linkage. Over residues 80-92 the composition is skewed to basic residues; the sequence is KKKNLNRSGKRGR. The span at 94–107 shows a compositional bias: polar residues; the sequence is SGTTKSAGYRTSTG. Serine 121 is subject to Phosphoserine.

The protein belongs to the UPF0461 family.

The protein is UPF0461 protein C5orf24 homolog of Pongo abelii (Sumatran orangutan).